Here is a 210-residue protein sequence, read N- to C-terminus: Proteasome subunit beta (210 aa).

A propeptide spans 1–9 (MNDKNTLKG) (removed in mature form; by autocatalysis). Residue threonine 10 is the Nucleophile of the active site.

This sequence belongs to the peptidase T1B family. The 20S proteasome core is composed of 14 alpha and 14 beta subunits that assemble into four stacked heptameric rings, resulting in a barrel-shaped structure. The two inner rings, each composed of seven catalytic beta subunits, are sandwiched by two outer rings, each composed of seven alpha subunits. The catalytic chamber with the active sites is on the inside of the barrel. Has a gated structure, the ends of the cylinder being occluded by the N-termini of the alpha-subunits. Is capped at one or both ends by the proteasome regulatory ATPase, PAN.

The protein localises to the cytoplasm. The enzyme catalyses Cleavage of peptide bonds with very broad specificity.. The formation of the proteasomal ATPase PAN-20S proteasome complex, via the docking of the C-termini of PAN into the intersubunit pockets in the alpha-rings, triggers opening of the gate for substrate entry. Interconversion between the open-gate and close-gate conformations leads to a dynamic regulation of the 20S proteasome proteolysis activity. Functionally, component of the proteasome core, a large protease complex with broad specificity involved in protein degradation. This is Proteasome subunit beta from Methanothermobacter thermautotrophicus (strain ATCC 29096 / DSM 1053 / JCM 10044 / NBRC 100330 / Delta H) (Methanobacterium thermoautotrophicum).